We begin with the raw amino-acid sequence, 377 residues long: Citrate synthase (377 aa).

Residues H220, H259, and D313 contribute to the active site.

The protein belongs to the citrate synthase family. Homodimer.

The enzyme catalyses oxaloacetate + acetyl-CoA + H2O = citrate + CoA + H(+). The protein operates within carbohydrate metabolism; tricarboxylic acid cycle; isocitrate from oxaloacetate: step 1/2. Functionally, might regulate the synthesis and function of enzymes involved in later enzymatic steps of Krebs cycle. Loss in activity results in sporulation defect. This chain is Citrate synthase (gltA), found in Deinococcus radiodurans (strain ATCC 13939 / DSM 20539 / JCM 16871 / CCUG 27074 / LMG 4051 / NBRC 15346 / NCIMB 9279 / VKM B-1422 / R1).